A 286-amino-acid polypeptide reads, in one-letter code: Sulfur carrier protein FdhD (286 aa).

Cysteine 110 serves as the catalytic Cysteine persulfide intermediate. 247–252 (FARGEK) provides a ligand contact to Mo-bis(molybdopterin guanine dinucleotide).

This sequence belongs to the FdhD family.

Its subcellular location is the cytoplasm. Functionally, required for formate dehydrogenase (FDH) activity. Acts as a sulfur carrier protein that transfers sulfur from IscS to the molybdenum cofactor prior to its insertion into FDH. The chain is Sulfur carrier protein FdhD from Wolinella succinogenes (strain ATCC 29543 / DSM 1740 / CCUG 13145 / JCM 31913 / LMG 7466 / NCTC 11488 / FDC 602W) (Vibrio succinogenes).